The chain runs to 343 residues: UDP-3-O-acylglucosamine N-acyltransferase (343 aa).

H239 (proton acceptor) is an active-site residue.

The protein belongs to the transferase hexapeptide repeat family. LpxD subfamily. In terms of assembly, homotrimer.

The catalysed reaction is a UDP-3-O-[(3R)-3-hydroxyacyl]-alpha-D-glucosamine + a (3R)-hydroxyacyl-[ACP] = a UDP-2-N,3-O-bis[(3R)-3-hydroxyacyl]-alpha-D-glucosamine + holo-[ACP] + H(+). Its pathway is bacterial outer membrane biogenesis; LPS lipid A biosynthesis. Catalyzes the N-acylation of UDP-3-O-acylglucosamine using 3-hydroxyacyl-ACP as the acyl donor. Is involved in the biosynthesis of lipid A, a phosphorylated glycolipid that anchors the lipopolysaccharide to the outer membrane of the cell. The sequence is that of UDP-3-O-acylglucosamine N-acyltransferase from Vibrio parahaemolyticus serotype O3:K6 (strain RIMD 2210633).